A 206-amino-acid chain; its full sequence is Ribosomal RNA small subunit methyltransferase G (206 aa).

S-adenosyl-L-methionine-binding positions include G71, F76, 125–126 (IE), and R139.

It belongs to the methyltransferase superfamily. RNA methyltransferase RsmG family.

Its subcellular location is the cytoplasm. The enzyme catalyses guanosine(527) in 16S rRNA + S-adenosyl-L-methionine = N(7)-methylguanosine(527) in 16S rRNA + S-adenosyl-L-homocysteine. In terms of biological role, specifically methylates the N7 position of guanine in position 527 of 16S rRNA. This Cereibacter sphaeroides (strain ATCC 17023 / DSM 158 / JCM 6121 / CCUG 31486 / LMG 2827 / NBRC 12203 / NCIMB 8253 / ATH 2.4.1.) (Rhodobacter sphaeroides) protein is Ribosomal RNA small subunit methyltransferase G.